Here is a 218-residue protein sequence, read N- to C-terminus: Ras-related protein Rab11D (218 aa).

20–27 serves as a coordination point for GTP; the sequence is GDSGVGKS. Positions 42–50 match the Effector region motif; that stretch reads SKSTIGVEF. GTP contacts are provided by residues 68–72 and 126–129; these read DTAGQ and NKSD. Residues Cys-215 and Cys-216 are each lipidated (S-geranylgeranyl cysteine).

This sequence belongs to the small GTPase superfamily. Rab family.

It is found in the cell membrane. This chain is Ras-related protein Rab11D (RAB11D), found in Lotus japonicus (Lotus corniculatus var. japonicus).